The primary structure comprises 223 residues: Expansin-B6 (223 aa).

The Expansin-like EG45 domain occupies 16–124 (GGACGFAVAN…RRVECLYRRT (109 aa)). Cystine bridges form between cysteine 19–cysteine 46, cysteine 49–cysteine 119, and cysteine 54–cysteine 60. The 82-residue stretch at 137–218 (YYISFVVEYE…NWKPNETYRS (82 aa)) folds into the Expansin-like CBD domain. Asparagine 213 carries an N-linked (GlcNAc...) asparagine glycan.

Belongs to the expansin family. Expansin B subfamily.

It is found in the secreted. Its subcellular location is the cell wall. It localises to the membrane. Its function is as follows. May cause loosening and extension of plant cell walls by disrupting non-covalent bonding between cellulose microfibrils and matrix glucans. The chain is Expansin-B6 from Arabidopsis thaliana (Mouse-ear cress).